The following is a 1732-amino-acid chain: Serine/threonine-protein kinase MRCK alpha (1732 aa).

Positions 77–343 constitute a Protein kinase domain; that stretch reads FEILKVIGRG…IEDFKKHPFF (267 aa). ATP contacts are provided by residues 83 to 91 and Lys-106; that span reads IGRGAFGEV. Asp-201 (proton acceptor) is an active-site residue. A phosphoserine; by autocatalysis mark is found at Ser-222 and Ser-234. Thr-240 carries the phosphothreonine; by autocatalysis modification. Positions 344-414 constitute an AGC-kinase C-terminal domain; it reads SGIDWDNIRN…TSSCVLSDRS (71 aa). Coiled coils occupy residues 437-670, 713-820, and 880-943; these read NNLA…KQKQ, SEIK…WEAQ, and LELQ…SEKG. The segment at 973 to 1002 is disordered; that stretch reads CTPAGKGRRIADSAPLPVHTPTLRKKGCPA. The Phorbol-ester/DAG-type zinc finger occupies 1012 to 1062; that stretch reads THQFFVKSFTAPTKCHQCTSLMVGLIRQGCSCEVCGFSCHITCVNKAPTTC. The region spanning 1082-1201 is the PH domain; that stretch reads GTAYEGHVRI…WVGVLSELHK (120 aa). Phosphoserine is present on Ser-1127. Residues 1227-1499 form the CNH domain; sequence IKTTQAAAII…RPLNTEGSLN (273 aa). A Phosphoserine modification is found at Ser-1545. The CRIB domain maps to 1571 to 1584; sequence ISNPTNFNHIAHMG. The segment at 1592–1732 is disordered; the sequence is LKDLPMNPRP…ESTDRGSWDP (141 aa). Polar residues predominate over residues 1604–1619; it reads SRTVFSGSVSIPSITK. Residues Ser-1611, Ser-1613, Ser-1629, Ser-1651, Ser-1664, Ser-1669, Ser-1693, Ser-1719, and Ser-1721 each carry the phosphoserine modification. Over residues 1625 to 1640 the composition is skewed to low complexity; sequence GRSMSASSGLSARSSA. Low complexity predominate over residues 1665-1674; it reads PSEGSLSSGG.

This sequence belongs to the protein kinase superfamily. AGC Ser/Thr protein kinase family. DMPK subfamily. In terms of assembly, homodimer and homotetramer via the coiled coil regions. Interacts tightly with GTP-bound but not GDP-bound CDC42. Forms a tripartite complex with MYO18A and LURAP1 with the latter acting as an adapter connecting CDC42BPA and MYO18A. LURAP1 binding results in activation of CDC42BPA by abolition of its negative autoregulation. Interacts with LURAP1. Interacts (via AGC-kinase C-terminal domain) with FAM89B/LRAP25 (via LRR repeat). Forms a tripartite complex with FAM89B/LRAP25 and LIMK1. It depends on Mg(2+) as a cofactor. Post-translationally, proteolytically cleaved by caspases upon apoptosis induction. The cleavage at Asp-478 by CASP3 increases its kinase activity (in vitro). In terms of tissue distribution, highly expressed in the brain and lung and present in lower levels in all other tissues tested.

Its subcellular location is the cytoplasm. It is found in the cell projection. It localises to the lamellipodium. It catalyses the reaction L-seryl-[protein] + ATP = O-phospho-L-seryl-[protein] + ADP + H(+). It carries out the reaction L-threonyl-[protein] + ATP = O-phospho-L-threonyl-[protein] + ADP + H(+). Maintained in an inactive, closed conformation by an interaction between the kinase domain and the negative autoregulatory C-terminal coiled-coil region. Agonist binding to the phorbol ester binding site disrupts this, releasing the kinase domain to allow N-terminus-mediated dimerization and kinase activation by transautophosphorylation. Inhibited by chelerythrine chloride. Functionally, serine/threonine-protein kinase which is an important downstream effector of CDC42 and plays a role in the regulation of cytoskeleton reorganization and cell migration. Regulates actin cytoskeletal reorganization via phosphorylation of PPP1R12A and MYL9/MLC2. In concert with MYO18A and LURAP1, is involved in modulating lamellar actomyosin retrograde flow that is crucial to cell protrusion and migration. Phosphorylates: PPP1R12C, LIMK1 and LIMK2. May play a role in TFRC-mediated iron uptake. In concert with FAM89B/LRAP25 mediates the targeting of LIMK1 to the lamellipodium resulting in its activation and subsequent phosphorylation of CFL1 which is important for lamellipodial F-actin regulation. Triggers the formation of an extrusion apical actin ring required for epithelial extrusion of apoptotic cells. This Rattus norvegicus (Rat) protein is Serine/threonine-protein kinase MRCK alpha.